Here is a 459-residue protein sequence, read N- to C-terminus: UDP-N-acetylmuramoylalanine--D-glutamate ligase (459 aa).

119–125 (GTNGKTT) provides a ligand contact to ATP.

Belongs to the MurCDEF family.

The protein resides in the cytoplasm. It carries out the reaction UDP-N-acetyl-alpha-D-muramoyl-L-alanine + D-glutamate + ATP = UDP-N-acetyl-alpha-D-muramoyl-L-alanyl-D-glutamate + ADP + phosphate + H(+). It participates in cell wall biogenesis; peptidoglycan biosynthesis. Its function is as follows. Cell wall formation. Catalyzes the addition of glutamate to the nucleotide precursor UDP-N-acetylmuramoyl-L-alanine (UMA). The polypeptide is UDP-N-acetylmuramoylalanine--D-glutamate ligase (Lacticaseibacillus casei (strain BL23) (Lactobacillus casei)).